The following is a 545-amino-acid chain: CTP synthase (545 aa).

Residues 1 to 266 (MTTNYIFVTG…DDLVCARFGI (266 aa)) form an amidoligase domain region. Residue serine 14 coordinates CTP. Serine 14 serves as a coordination point for UTP. Residues 15 to 20 (SLGKGI) and aspartate 72 contribute to the ATP site. Positions 72 and 140 each coordinate Mg(2+). Residues 147 to 149 (DIE), 187 to 192 (KTKPTQ), and lysine 223 each bind CTP. UTP is bound by residues 187 to 192 (KTKPTQ) and lysine 223. Residue 239–241 (KDV) participates in ATP binding. The Glutamine amidotransferase type-1 domain maps to 291 to 542 (TIGMVGKYIE…IKAAGENARG (252 aa)). An L-glutamine-binding site is contributed by glycine 352. Catalysis depends on cysteine 379, which acts as the Nucleophile; for glutamine hydrolysis. L-glutamine-binding positions include 380 to 383 (LGMQ), glutamate 403, and arginine 470. Active-site residues include histidine 515 and glutamate 517.

It belongs to the CTP synthase family. As to quaternary structure, homotetramer.

The catalysed reaction is UTP + L-glutamine + ATP + H2O = CTP + L-glutamate + ADP + phosphate + 2 H(+). It catalyses the reaction L-glutamine + H2O = L-glutamate + NH4(+). The enzyme catalyses UTP + NH4(+) + ATP = CTP + ADP + phosphate + 2 H(+). It participates in pyrimidine metabolism; CTP biosynthesis via de novo pathway; CTP from UDP: step 2/2. Its activity is regulated as follows. Allosterically activated by GTP, when glutamine is the substrate; GTP has no effect on the reaction when ammonia is the substrate. The allosteric effector GTP functions by stabilizing the protein conformation that binds the tetrahedral intermediate(s) formed during glutamine hydrolysis. Inhibited by the product CTP, via allosteric rather than competitive inhibition. Catalyzes the ATP-dependent amination of UTP to CTP with either L-glutamine or ammonia as the source of nitrogen. Regulates intracellular CTP levels through interactions with the four ribonucleotide triphosphates. This Vibrio vulnificus (strain CMCP6) protein is CTP synthase.